Here is a 214-residue protein sequence, read N- to C-terminus: 3,4-dihydroxy-2-butanone 4-phosphate synthase (214 aa).

Residues 37-38 (RE), Asp42, 150-154 (RRGHT), and Glu174 contribute to the D-ribulose 5-phosphate site. Glu38 is a Mg(2+) binding site. Residue His153 participates in Mg(2+) binding.

Belongs to the DHBP synthase family. Homodimer. The cofactor is Mg(2+). Mn(2+) is required as a cofactor.

It carries out the reaction D-ribulose 5-phosphate = (2S)-2-hydroxy-3-oxobutyl phosphate + formate + H(+). The protein operates within cofactor biosynthesis; riboflavin biosynthesis; 2-hydroxy-3-oxobutyl phosphate from D-ribulose 5-phosphate: step 1/1. Its function is as follows. Catalyzes the conversion of D-ribulose 5-phosphate to formate and 3,4-dihydroxy-2-butanone 4-phosphate. The sequence is that of 3,4-dihydroxy-2-butanone 4-phosphate synthase from Histophilus somni (strain 2336) (Haemophilus somnus).